A 426-amino-acid chain; its full sequence is Glutamyl-tRNA reductase (426 aa).

Substrate contacts are provided by residues 49–52 (TCNR), Ser-101, 106–108 (EPQ), and Gln-112. The active-site Nucleophile is the Cys-50. 181-186 (GAGETI) is an NADP(+) binding site. Residues 404–426 (DRLFPEKPGLPTSPHSYPDREDR) form a disordered region.

Belongs to the glutamyl-tRNA reductase family. As to quaternary structure, homodimer.

It catalyses the reaction (S)-4-amino-5-oxopentanoate + tRNA(Glu) + NADP(+) = L-glutamyl-tRNA(Glu) + NADPH + H(+). The protein operates within porphyrin-containing compound metabolism; protoporphyrin-IX biosynthesis; 5-aminolevulinate from L-glutamyl-tRNA(Glu): step 1/2. Its function is as follows. Catalyzes the NADPH-dependent reduction of glutamyl-tRNA(Glu) to glutamate 1-semialdehyde (GSA). This chain is Glutamyl-tRNA reductase, found in Xanthomonas campestris pv. phaseoli.